Here is a 465-residue protein sequence, read N- to C-terminus: Uronate isomerase (465 aa).

This sequence belongs to the metallo-dependent hydrolases superfamily. Uronate isomerase family.

It carries out the reaction D-glucuronate = D-fructuronate. It catalyses the reaction aldehydo-D-galacturonate = keto-D-tagaturonate. The protein operates within carbohydrate metabolism; pentose and glucuronate interconversion. The protein is Uronate isomerase of Streptococcus equi subsp. zooepidemicus (strain H70).